Consider the following 478-residue polypeptide: MQQTCIRLVKLDMLSTLTRFRTHSAIRCCAQRLFHCRPSLFISARTYFIKIDSSSLPKLKGSVSFSASCVSLGSSRLGLCSSSFKTGAPAALRAPVVFQRTRGFHTSGRRRALPALPLLWMVLKPLQKIMAIILGRSIRKWWVALPANKKQLFREWSWRRRWHFLGAGTGLLFIASLFFFTHLDESPITGRTRLLVFSRKNFRELAQFNADAFMEEFKDSLIASSDPRHKVVEQVVQILAQRNQDIAEISAVPWTVHVVDSPTMNAFVLPNGEIFVFTGMLNAVTDIHQLTFILGHEMAHALIGHAAEQASLSHVVELLSLVLLTAIWAVCPRDSLAALGHWIQGKLVQFLFDRPFSRKLEAEADQVGLQMAAKACADVRAGPVFWEQMEIFDQLSGQPTMPEWLSTHPSHQNRVRQLDRLIPEALELRARCNCPELPKTDPRVVFNEAVRLVLEGKKEQMLEKEEKNGKTQTGDMFP.

The interval 134–164 (LGRSIRKWWVALPANKKQLFREWSWRRRWHF) is stress-sensor region. Residues 163–183 (HFLGAGTGLLFIASLFFFTHL) form a helical membrane-spanning segment. Position 296 (His296) interacts with Zn(2+). Glu297 is a catalytic residue. Positions 300 and 361 each coordinate Zn(2+). Cys376 and Cys434 are disulfide-bonded.

This sequence belongs to the peptidase M48 family. As to quaternary structure, homooligomer. Requires Zn(2+) as cofactor. Post-translationally, autocatalytically cleaved in response to mitochondrial depolarization both at the N-terminus and C-terminus to generate the short active form (S-OMA1). The S-OMA1 form is unstable. In terms of processing, may form a redox-dependent disulfide bond. Exists in a semi-oxidized state and is activated by prolonged hypoxia.

The protein resides in the mitochondrion inner membrane. Protease activity is activated upon autocatalytic cleavage in response to mitochondrial depolarization. In terms of biological role, metalloprotease that is part of the quality control system in the inner membrane of mitochondria. Activated in response to various mitochondrial stress, leading to the proteolytic cleavage of target proteins, such as opa1 and dele1. Involved in the fusion of the mitochondrial inner membranes by mediating cleavage of opa1 at S1 position, generating the soluble opa1 (S-opa1), which cooperates with the membrane form (L-opa1) to coordinate the fusion of mitochondrial inner membranes. Following stress conditions that induce loss of mitochondrial membrane potential, mediates cleavage of opa1, leading to excess production of soluble opa1 (S-opa1) and negative regulation of mitochondrial fusion. Also acts as an activator of the integrated stress response (ISR): in response to mitochondrial stress, mediates cleavage of dele1 to generate the processed form of dele1 (S-DELE1), which translocates to the cytosol and activates eif2ak1/hri to trigger the ISR. Required for the stability of the respiratory supercomplexes. The polypeptide is Metalloendopeptidase OMA1, mitochondrial (Danio rerio (Zebrafish)).